Here is a 92-residue protein sequence, read N- to C-terminus: Small ribosomal subunit protein uS19 (92 aa).

The protein belongs to the universal ribosomal protein uS19 family.

Protein S19 forms a complex with S13 that binds strongly to the 16S ribosomal RNA. This is Small ribosomal subunit protein uS19 from Cyanothece sp. (strain PCC 7425 / ATCC 29141).